We begin with the raw amino-acid sequence, 180 residues long: Large ribosomal subunit protein uL6 (180 aa).

Belongs to the universal ribosomal protein uL6 family. In terms of assembly, part of the 50S ribosomal subunit.

Its function is as follows. This protein binds to the 23S rRNA, and is important in its secondary structure. It is located near the subunit interface in the base of the L7/L12 stalk, and near the tRNA binding site of the peptidyltransferase center. This chain is Large ribosomal subunit protein uL6, found in Desulforapulum autotrophicum (strain ATCC 43914 / DSM 3382 / VKM B-1955 / HRM2) (Desulfobacterium autotrophicum).